The primary structure comprises 78 residues: Sec-independent protein translocase protein TatA (78 aa).

The chain crosses the membrane as a helical span at residues methionine 1–glycine 21. A disordered region spans residues aspartate 46–alanine 78. Positions threonine 52–threonine 62 are enriched in basic and acidic residues. Positions threonine 63 to alanine 78 are enriched in low complexity.

The protein belongs to the TatA/E family. As to quaternary structure, the Tat system comprises two distinct complexes: a TatABC complex, containing multiple copies of TatA, TatB and TatC subunits, and a separate TatA complex, containing only TatA subunits. Substrates initially bind to the TatABC complex, which probably triggers association of the separate TatA complex to form the active translocon.

It is found in the cell inner membrane. Functionally, part of the twin-arginine translocation (Tat) system that transports large folded proteins containing a characteristic twin-arginine motif in their signal peptide across membranes. TatA could form the protein-conducting channel of the Tat system. In Nitratiruptor sp. (strain SB155-2), this protein is Sec-independent protein translocase protein TatA.